Reading from the N-terminus, the 133-residue chain is Ycf54-like protein (133 aa).

This sequence belongs to the ycf54 family.

The sequence is that of Ycf54-like protein from Synechocystis sp. (strain ATCC 27184 / PCC 6803 / Kazusa).